Here is a 422-residue protein sequence, read N- to C-terminus: Keratin, type I cytoskeletal 23 (422 aa).

Over residues 1 to 13 the composition is skewed to polar residues; it reads MNSGHSFSQTPSA. Residues 1–71 are head; it reads MNSGHSFSQT…GRSSPLLGGN (71 aa). Positions 1-73 are disordered; the sequence is MNSGHSFSQT…SSPLLGGNGK (73 aa). The coil 1A stretch occupies residues 72–107; sequence GKATMQNLNDRLASYLEKVRALEEANMKLESRILKW. Positions 72 to 382 constitute an IF rod domain; the sequence is GKATMQNLND…RLLEGESEGT (311 aa). A linker 1 region spans residues 108-125; the sequence is HQQRDPGSKKDYSQYEEN. The tract at residues 126-217 is coil 1B; that stretch reads ITHLQEQIVD…KHHEQEMEKH (92 aa). Residues 218-240 form a linker 12 region; the sequence is HVPSDFNVNVKVDTGPREDLIKV. The tract at residues 241–378 is coil 2; it reads LEDMRQEYEL…TTYRRLLEGE (138 aa). A rod-like helical tail region spans residues 379–422; sequence SEGTREESKSSMKVSATPKIKAITQETINGRLVLCQVNEIQKHA.

It belongs to the intermediate filament family. In terms of assembly, heterotetramer of two type I and two type II keratins.

The chain is Keratin, type I cytoskeletal 23 (KRT23) from Homo sapiens (Human).